A 309-amino-acid polypeptide reads, in one-letter code: Taste receptor type 2 member 31 (309 aa).

Residues 1–2 (MT) are Extracellular-facing. The helical transmembrane segment at 3–23 (TFLPIIFSSLVVVIFVIGNFA) threads the bilayer. Residues 24–55 (NGFIALVNSIEWFKXQKISFADQILTALAVSR) lie on the Cytoplasmic side of the membrane. Residues 56–76 (VGLLWVLLLNWYSTVLNPAFY) form a helical membrane-spanning segment. Over 77 to 100 (SVEVRTTAYNVWAVTGHFSNWLAT) the chain is Extracellular. A helical membrane pass occupies residues 101-121 (SLSIFYLLKIANFSNFIFLHL). Over 122–126 (KRRVK) the chain is Cytoplasmic. Residues 127-147 (SVILVMLLGPLLFLACQLFMI) form a helical membrane-spanning segment. Topologically, residues 148-181 (NMKEIVRTKEYEGNMTWKIKLRSAVYLSDATVTT) are extracellular. Asn161 carries an N-linked (GlcNAc...) asparagine glycan. The helical transmembrane segment at 182–202 (LGNLVPFTLTLLCFLLLICSL) threads the bilayer. At 203–229 (CKHLKKMQLHGKGSQDPSTKVHIKVLQ) the chain is on the cytoplasmic side. Residues 230–250 (TVISFLLLCAIYFLSIMISVW) traverse the membrane as a helical segment. Residues 251-259 (SFGSLKNKP) are Extracellular-facing. Residues 260–280 (VFMFCKAIRFSYPSIHPFILI) traverse the membrane as a helical segment. The Cytoplasmic portion of the chain corresponds to 281–309 (WGNKKLKQTFLSVLRQVRYWVKGEKPSSP).

It belongs to the G-protein coupled receptor T2R family.

It is found in the membrane. Receptor that may play a role in the perception of bitterness and is gustducin-linked. May play a role in sensing the chemical composition of the gastrointestinal content. The activity of this receptor may stimulate alpha gustducin, mediate PLC-beta-2 activation and lead to the gating of TRPM5. This chain is Taste receptor type 2 member 31 (TAS2R31), found in Pan paniscus (Pygmy chimpanzee).